The primary structure comprises 529 residues: Sodium/hydrogen exchanger 4 (529 aa).

Residues 1 to 19 are Cytoplasmic-facing; sequence MSIGLTEFVTNKLAAEHPQ. The chain crosses the membrane as a helical span at residues 20-40; the sequence is VIPISVFIAILCLCLVIGHLL. Over 41–45 the chain is Vacuolar; the sequence is EENRW. The helical transmembrane segment at 46-66 threads the bilayer; the sequence is VNESITAILVGAASGTVILLI. Residues 67-73 are Cytoplasmic-facing; sequence SKGKSSH. Residues 74–94 constitute an intramembrane region (helical); the sequence is ILVFDEELFFIYLLPPIIFNA. Residues 95 to 112 lie on the Cytoplasmic side of the membrane; the sequence is GFQVKKKKFFHNFLTIMS. A helical transmembrane segment spans residues 113–133; sequence FGVIGVFISTVIISFGTWWLF. Over 134 to 171 the chain is Vacuolar; that stretch reads PKLGFKGLSARDYLAIGTIFSSTDTVCTLQILHQDETP. The chain crosses the membrane as a helical span at residues 172–192; sequence LLYSLVFGEGVVNDATSVVLF. The Cytoplasmic portion of the chain corresponds to 193–214; it reads NAVQKIQFESLTGWTALQVFGN. A helical membrane pass occupies residues 215–235; it reads FLYLFSTSTLLGIGVGLITSF. At 236–250 the chain is on the vacuolar side; sequence VLKTLYFGRHSTTRE. Residues 251–267 form a helical membrane-spanning segment; that stretch reads LAIMVLMAYLSYMLAEL. Over 268–273 the chain is Cytoplasmic; the sequence is FSLSGI. The helical transmembrane segment at 274-291 threads the bilayer; that stretch reads LTVFFCGVLMSHYASYNV. Over 292 to 301 the chain is Vacuolar; it reads TESSRITSRH. A helical membrane pass occupies residues 302 to 322; the sequence is VFAMLSFIAETFIFLYVGTDA. Residues 323–342 are Cytoplasmic-facing; it reads LDFTKWKTSSLSFGGTLGVS. A helical transmembrane segment spans residues 343–363; it reads GVITALVLLGRAAFVFPLSVL. Over 364–380 the chain is Vacuolar; the sequence is TNFMNRHTERNESITFK. Residue N374 is glycosylated (N-linked (GlcNAc...) asparagine). A helical transmembrane segment spans residues 381 to 401; it reads HQVIIWWAGLMRGAVSIALAF. Residues 402 to 415 lie on the Cytoplasmic side of the membrane; sequence KQFTYSGVTLDPVN. The chain crosses the membrane as a helical span at residues 416-436; the sequence is AAMVTNTTIVVLFTTLVFGFL. Topologically, residues 437–529 are vacuolar; that stretch reads TKPLVNYLLP…GPRRENQPEC (93 aa).

The protein belongs to the monovalent cation:proton antiporter 1 (CPA1) transporter (TC 2.A.36) family. In terms of tissue distribution, expressed at very low levels in roots and shoots.

It is found in the vacuole membrane. The enzyme catalyses Na(+)(in) + H(+)(out) = Na(+)(out) + H(+)(in). It carries out the reaction K(+)(in) + H(+)(out) = K(+)(out) + H(+)(in). Functionally, may act in low affinity electroneutral exchange of protons for cations such as Na(+) or K(+) across membranes. May also exchange Li(+) and Cs(+) with a lower affinity. This Arabidopsis thaliana (Mouse-ear cress) protein is Sodium/hydrogen exchanger 4 (NHX4).